Reading from the N-terminus, the 221-residue chain is Ribonuclease T (221 aa).

The Exonuclease domain occupies 20–194 (VVIDVETAGF…YDTERTAELF (175 aa)). The Mg(2+) site is built by aspartate 23, glutamate 25, histidine 181, and aspartate 186. Residue histidine 181 is the Proton donor/acceptor of the active site.

It belongs to the RNase T family. Homodimer. Mg(2+) serves as cofactor.

Functionally, trims short 3' overhangs of a variety of RNA species, leaving a one or two nucleotide 3' overhang. Responsible for the end-turnover of tRNA: specifically removes the terminal AMP residue from uncharged tRNA (tRNA-C-C-A). Also appears to be involved in tRNA biosynthesis. The sequence is that of Ribonuclease T from Shewanella frigidimarina (strain NCIMB 400).